A 358-amino-acid chain; its full sequence is Aminomethyltransferase (358 aa).

Belongs to the GcvT family. As to quaternary structure, the glycine cleavage system is composed of four proteins: P, T, L and H.

The enzyme catalyses N(6)-[(R)-S(8)-aminomethyldihydrolipoyl]-L-lysyl-[protein] + (6S)-5,6,7,8-tetrahydrofolate = N(6)-[(R)-dihydrolipoyl]-L-lysyl-[protein] + (6R)-5,10-methylene-5,6,7,8-tetrahydrofolate + NH4(+). In terms of biological role, the glycine cleavage system catalyzes the degradation of glycine. The polypeptide is Aminomethyltransferase (Francisella tularensis subsp. mediasiatica (strain FSC147)).